A 535-amino-acid polypeptide reads, in one-letter code: UDP-N-acetylmuramoyl-L-alanyl-D-glutamate--2,6-diaminopimelate ligase (535 aa).

L67 lines the UDP-N-acetyl-alpha-D-muramoyl-L-alanyl-D-glutamate pocket. 153-159 (GTSGKTT) is a binding site for ATP. UDP-N-acetyl-alpha-D-muramoyl-L-alanyl-D-glutamate contacts are provided by residues 195-196 (TT), S222, and R230. K262 is modified (N6-carboxylysine). Residues R424, 448 to 451 (DNPR), G502, and E506 contribute to the meso-2,6-diaminopimelate site. Residues 448–451 (DNPR) carry the Meso-diaminopimelate recognition motif motif.

The protein belongs to the MurCDEF family. MurE subfamily. The cofactor is Mg(2+). Carboxylation is probably crucial for Mg(2+) binding and, consequently, for the gamma-phosphate positioning of ATP.

The protein resides in the cytoplasm. The catalysed reaction is UDP-N-acetyl-alpha-D-muramoyl-L-alanyl-D-glutamate + meso-2,6-diaminopimelate + ATP = UDP-N-acetyl-alpha-D-muramoyl-L-alanyl-gamma-D-glutamyl-meso-2,6-diaminopimelate + ADP + phosphate + H(+). It functions in the pathway cell wall biogenesis; peptidoglycan biosynthesis. In terms of biological role, catalyzes the addition of meso-diaminopimelic acid to the nucleotide precursor UDP-N-acetylmuramoyl-L-alanyl-D-glutamate (UMAG) in the biosynthesis of bacterial cell-wall peptidoglycan. The polypeptide is UDP-N-acetylmuramoyl-L-alanyl-D-glutamate--2,6-diaminopimelate ligase (Mycobacterium bovis (strain ATCC BAA-935 / AF2122/97)).